Here is a 346-residue protein sequence, read N- to C-terminus: Probable dolichyl-diphosphooligosaccharide--protein glycosyltransferase subunit 3B (346 aa).

The signal sequence occupies residues 1–22 (MALKSKLVSLLFLIATLSSTFA). Residues 23 to 189 (ASFSDSDSDS…KVGPIQRPPL (167 aa)) are Lumenal-facing. Asn108 carries an N-linked (GlcNAc...) asparagine glycan. The helical transmembrane segment at 190 to 210 (LSKPQIGIIVALIVIATPFII) threads the bilayer. The Cytoplasmic segment spans residues 211 to 225 (KRVLKGETILHDTRL). Residues 226–246 (WLSGAIFIYFFSVAGTMHNII) form a helical membrane-spanning segment. At 247-277 (RKMPMFLQDRNDPNKLVFFYQGSGMQLGAEG) the chain is on the lumenal side. Residues 278-298 (FAVGFLYTVVGLLLAFVTNVL) traverse the membrane as a helical segment. The Cytoplasmic segment spans residues 299-308 (VRVKNITAQR). Residues 309-329 (LIMLLALFISFWAVKKVVYLD) traverse the membrane as a helical segment. The Lumenal segment spans residues 330-346 (NWKTGYGIHPYWPSSWR).

This sequence belongs to the OST3/OST6 family. Component of the oligosaccharyltransferase (OST) complex.

It is found in the endoplasmic reticulum membrane. Its function is as follows. Subunit of the oligosaccharyl transferase (OST) complex that catalyzes the initial transfer of a defined glycan (Glc(3)Man(9)GlcNAc(2) in eukaryotes) from the lipid carrier dolichol-pyrophosphate to an asparagine residue within an Asn-X-Ser/Thr consensus motif in nascent polypeptide chains, the first step in protein N-glycosylation. N-glycosylation occurs cotranslationally and the complex associates with the Sec61 complex at the channel-forming translocon complex that mediates protein translocation across the endoplasmic reticulum (ER). All subunits are required for a maximal enzyme activity. This Arabidopsis thaliana (Mouse-ear cress) protein is Probable dolichyl-diphosphooligosaccharide--protein glycosyltransferase subunit 3B (OST3B).